The chain runs to 410 residues: MTAKALEGIRVLDMTHVQSGPSATQLLAWLGADVVKLEAPHGDITRGQLRDLPDVDSLYFTMLNCNKRSITLNTKSERGKEILTELIRRSDVMVENFGPGAVDRMGFTWDRVKEINPRIVYASIKGFGEGPYTAFKAYEVVAQAMGGSMSTTGFEDGPPLATGAQIGDSGTGVHVVAGILAALYQREHTGRGQRVNVAMQHAVLNLCRVKLRDQQRLSHGPLAEYPNEDFGDEVPRSGNASGGGQPGWAVKCAPGGPNDYVYVIVQPVGWQPLSELIGRPELAEDPEWATPRARLPKLNKMFQLIEEWSSTLPKWEVLERLNAHNIPCGPILSTKEIIEDDSLVANEMVVTVPHPERGEFVTVGSPLKLSDSPVEVTSSPLLGEHNEEVYVGELGLGDEELRLLKSSGVI.

Residues 18 to 19 (QS), 72 to 75 (LNTK), 96 to 98 (NFG), Arg-104, and 136 to 139 (KAYE) contribute to the CoA site. The active-site Nucleophile is the Asp-168. The interval 221–245 (PLAEYPNEDFGDEVPRSGNASGGGQ) is disordered. Residue 243–245 (GGQ) coordinates substrate.

This sequence belongs to the CoA-transferase III family. Frc subfamily. As to quaternary structure, homodimer.

It catalyses the reaction formyl-CoA + oxalate = oxalyl-CoA + formate. It functions in the pathway metabolic intermediate degradation; oxalate degradation; CO(2) and formate from oxalate: step 1/2. In terms of biological role, involved in the catabolism of oxalate and in the adapatation to low pH via the induction of the oxalate-dependent acid tolerance response (ATR). Catalyzes the transfer of the CoA moiety from formyl-CoA to oxalate. The chain is Formyl-CoA:oxalate CoA-transferase from Streptomyces coelicolor (strain ATCC BAA-471 / A3(2) / M145).